Here is a 311-residue protein sequence, read N- to C-terminus: Olfactory receptor 10G8 (311 aa).

At 1–23 the chain is on the extracellular side; it reads MSNASLLTAFILMGLPHAPALDA. An N-linked (GlcNAc...) asparagine glycan is attached at Asn3. A helical membrane pass occupies residues 24–44; it reads PLFGVFLVVYVLTVLGNLLIL. The Cytoplasmic segment spans residues 45–52; sequence LVIRVDSH. The helical transmembrane segment at 53 to 73 threads the bilayer; sequence LHTTMYYFLTNLSFIDMWFST. Residues 74-98 are Extracellular-facing; sequence VTVPKLLMTLVFPSGRAISFHSCMA. A disulfide bridge links Cys96 with Cys188. The helical transmembrane segment at 99–119 threads the bilayer; the sequence is QLYFFHFLGGTECFLYRVMSC. At 120–138 the chain is on the cytoplasmic side; sequence DRYLAISYPLRYTSMMTGR. A helical transmembrane segment spans residues 139 to 159; the sequence is SCTLLATSTWLSGSLHSAVQA. Topologically, residues 160–196 are extracellular; it reads ILTFHLPYCGPNWIQHYLCDAPPILKLACADTSAIET. Residues 197–216 traverse the membrane as a helical segment; sequence VIFVTVGIVASGCFVLIVLS. At 217–236 the chain is on the cytoplasmic side; the sequence is YVSIVCSILRIRTSEGKHRA. A helical membrane pass occupies residues 237 to 257; the sequence is FQTCASHCIVVLCFFGPGLFI. The Extracellular portion of the chain corresponds to 258-268; the sequence is YLRPGSRKAVD. The helical transmembrane segment at 269–289 threads the bilayer; the sequence is GVVAVFYTVLTPLLNPVVYTL. Residues 290–311 are Cytoplasmic-facing; sequence RNKEVKKALLKLKDKVAHSQSK.

Belongs to the G-protein coupled receptor 1 family.

The protein localises to the cell membrane. Functionally, odorant receptor. The sequence is that of Olfactory receptor 10G8 (OR10G8) from Homo sapiens (Human).